The following is a 334-amino-acid chain: S-adenosylmethionine decarboxylase proenzyme (334 aa).

Position 7 (F7) interacts with substrate. Catalysis depends on residues E8 and E11. Residue E67 participates in substrate binding. S68 (schiff-base intermediate with substrate; via pyruvic acid) is an active-site residue. A Pyruvic acid (Ser); by autocatalysis modification is found at S68. The active-site Proton donor; for catalytic activity is C82. F223 serves as a coordination point for substrate. Residues S229 and H243 each act as proton acceptor; for processing activity in the active site. E247 serves as a coordination point for substrate. S298 carries the post-translational modification Phosphoserine.

This sequence belongs to the eukaryotic AdoMetDC family. Heterotetramer of two alpha and two beta chains. It depends on pyruvate as a cofactor. Is synthesized initially as an inactive proenzyme. Formation of the active enzyme involves a self-maturation process in which the active site pyruvoyl group is generated from an internal serine residue via an autocatalytic post-translational modification. Two non-identical subunits are generated from the proenzyme in this reaction, and the pyruvate is formed at the N-terminus of the alpha chain, which is derived from the carboxyl end of the proenzyme. The post-translation cleavage follows an unusual pathway, termed non-hydrolytic serinolysis, in which the side chain hydroxyl group of the serine supplies its oxygen atom to form the C-terminus of the beta chain, while the remainder of the serine residue undergoes an oxidative deamination to produce ammonia and the pyruvoyl group blocking the N-terminus of the alpha chain.

The enzyme catalyses S-adenosyl-L-methionine + H(+) = S-adenosyl 3-(methylsulfanyl)propylamine + CO2. It functions in the pathway amine and polyamine biosynthesis; S-adenosylmethioninamine biosynthesis; S-adenosylmethioninamine from S-adenosyl-L-methionine: step 1/1. Functionally, essential for biosynthesis of the polyamines spermidine and spermine. Promotes maintenance and self-renewal of embryonic stem cells, by maintaining spermine levels. The protein is S-adenosylmethionine decarboxylase proenzyme (AMD1) of Mesocricetus auratus (Golden hamster).